The following is a 457-amino-acid chain: Siroheme synthase (457 aa).

Residues methionine 1–threonine 204 form a precorrin-2 dehydrogenase /sirohydrochlorin ferrochelatase region. NAD(+)-binding positions include aspartate 22 to valine 23 and leucine 43 to alanine 44. Serine 128 bears the Phosphoserine mark. Positions glycine 216 to histidine 457 are uroporphyrinogen-III C-methyltransferase. Proline 225 lines the S-adenosyl-L-methionine pocket. The Proton acceptor role is filled by aspartate 248. The active-site Proton donor is lysine 270. Residues glycine 301 to aspartate 303, isoleucine 306, threonine 331 to alanine 332, methionine 382, and glycine 411 contribute to the S-adenosyl-L-methionine site.

In the N-terminal section; belongs to the precorrin-2 dehydrogenase / sirohydrochlorin ferrochelatase family. The protein in the C-terminal section; belongs to the precorrin methyltransferase family.

The catalysed reaction is uroporphyrinogen III + 2 S-adenosyl-L-methionine = precorrin-2 + 2 S-adenosyl-L-homocysteine + H(+). It catalyses the reaction precorrin-2 + NAD(+) = sirohydrochlorin + NADH + 2 H(+). It carries out the reaction siroheme + 2 H(+) = sirohydrochlorin + Fe(2+). Its pathway is cofactor biosynthesis; adenosylcobalamin biosynthesis; precorrin-2 from uroporphyrinogen III: step 1/1. The protein operates within cofactor biosynthesis; adenosylcobalamin biosynthesis; sirohydrochlorin from precorrin-2: step 1/1. It participates in porphyrin-containing compound metabolism; siroheme biosynthesis; precorrin-2 from uroporphyrinogen III: step 1/1. It functions in the pathway porphyrin-containing compound metabolism; siroheme biosynthesis; siroheme from sirohydrochlorin: step 1/1. Its pathway is porphyrin-containing compound metabolism; siroheme biosynthesis; sirohydrochlorin from precorrin-2: step 1/1. Functionally, multifunctional enzyme that catalyzes the SAM-dependent methylations of uroporphyrinogen III at position C-2 and C-7 to form precorrin-2 via precorrin-1. Then it catalyzes the NAD-dependent ring dehydrogenation of precorrin-2 to yield sirohydrochlorin. Finally, it catalyzes the ferrochelation of sirohydrochlorin to yield siroheme. This is Siroheme synthase from Escherichia fergusonii (strain ATCC 35469 / DSM 13698 / CCUG 18766 / IAM 14443 / JCM 21226 / LMG 7866 / NBRC 102419 / NCTC 12128 / CDC 0568-73).